Reading from the N-terminus, the 387-residue chain is 2-alkyl-3-oxoalkanoate reductase (387 aa).

Catalysis depends on tyrosine 190, which acts as the Proton acceptor. Lysine 194 provides a ligand contact to NADP(+).

The protein belongs to the 3-beta-HSD family.

The enzyme catalyses a (2R,3S)-2-alkyl-3-hydroxyalkanoate + NADP(+) = an (R)-2-alkyl-3-oxoalkanoate + NADPH + H(+). Involved in olefin biosynthesis. Catalyzes the reversible stereospecific NADPH-dependent reduction of 2-alkyl-3-oxoalkanoic acids to 2-alkyl-3-hydroxyalkanoic acids. The S.oneidensis oleABCD genes produce 3,6,9,12,15,19,22,25,28-hentriacontanonaene, which may aid the cells in adapting to a sudden drop in temperature. This is 2-alkyl-3-oxoalkanoate reductase from Shewanella oneidensis (strain ATCC 700550 / JCM 31522 / CIP 106686 / LMG 19005 / NCIMB 14063 / MR-1).